The sequence spans 96 residues: Protein transport protein Sec61 subunit beta (96 aa).

Residues 1-17 are compositionally biased toward polar residues; the sequence is MPGPTPSGTNVGSSGRS. A disordered region spans residues 1–54; sequence MPGPTPSGTNVGSSGRSPSKAVAARAAGSTVRQRKNASCGTRSAGRTTSAGTGG. Pro2 carries the N-acetylproline modification. Over 2–71 the chain is Cytoplasmic; that stretch reads PGPTPSGTNV…DSPGLKVGPV (70 aa). Position 7 is a phosphoserine (Ser7). The residue at position 9 (Thr9) is a Phosphothreonine. Phosphoserine is present on residues Ser13, Ser14, and Ser17. Cys39 carries S-palmitoyl cysteine lipidation. The segment covering 40–50 has biased composition (low complexity); it reads GTRSAGRTTSA. The helical transmembrane segment at 72-91 threads the bilayer; sequence PVLVMSLLFIASVFMLHIWG. At 92-96 the chain is on the lumenal side; the sequence is KYTRS.

Belongs to the SEC61-beta family. As to quaternary structure, the SEC61 channel-forming translocon complex consists of channel-forming core components SEC61A1, SEC61B and SEC61G and different auxiliary components such as SEC62 and SEC63. The SEC61 channel associates with the multi-pass translocon (MPT) complex. Interacts with TRAM1.

It localises to the endoplasmic reticulum membrane. Functionally, component of SEC61 channel-forming translocon complex that mediates transport of signal peptide-containing precursor polypeptides across the endoplasmic reticulum (ER). Forms a ribosome receptor and a gated pore in the ER membrane, both functions required for cotranslational translocation of nascent polypeptides. The SEC61 channel is also involved in ER membrane insertion of transmembrane proteins: it mediates membrane insertion of the first few transmembrane segments of proteins, while insertion of subsequent transmembrane regions of multi-pass membrane proteins is mediated by the multi-pass translocon (MPT) complex. The SEC61 channel cooperates with the translocating protein TRAM1 to import nascent proteins into the ER. This chain is Protein transport protein Sec61 subunit beta (SEC61B), found in Canis lupus familiaris (Dog).